A 193-amino-acid polypeptide reads, in one-letter code: Probable molybdenum cofactor guanylyltransferase (193 aa).

GTP contacts are provided by residues 9–11 (TAG), Lys-21, Asp-64, and Asp-93. Asp-93 contributes to the Mg(2+) binding site.

It belongs to the MobA family. The cofactor is Mg(2+).

The protein localises to the cytoplasm. It catalyses the reaction Mo-molybdopterin + GTP + H(+) = Mo-molybdopterin guanine dinucleotide + diphosphate. Its function is as follows. Transfers a GMP moiety from GTP to Mo-molybdopterin (Mo-MPT) cofactor (Moco or molybdenum cofactor) to form Mo-molybdopterin guanine dinucleotide (Mo-MGD) cofactor. The polypeptide is Probable molybdenum cofactor guanylyltransferase (Deinococcus radiodurans (strain ATCC 13939 / DSM 20539 / JCM 16871 / CCUG 27074 / LMG 4051 / NBRC 15346 / NCIMB 9279 / VKM B-1422 / R1)).